Reading from the N-terminus, the 154-residue chain is Ubiquitin-like protein 4A-A (154 aa).

The region spanning 1–76 (MILTVKPLQG…LNLVVRPAGE (76 aa)) is the Ubiquitin-like domain.

As to quaternary structure, component of the BAT3 complex.

It localises to the cytoplasm. The protein localises to the cytosol. Component of the BAT3 complex, a multiprotein complex involved in the post-translational delivery of tail-anchored (TA) membrane proteins to the endoplasmic reticulum membrane. TA membrane proteins, also named type II transmembrane proteins, contain a single C-terminal transmembrane region. The chain is Ubiquitin-like protein 4A-A (ubl4aa) from Oncorhynchus mykiss (Rainbow trout).